The chain runs to 242 residues: Pyridoxine 5'-phosphate synthase (242 aa).

Asparagine 6 contacts 3-amino-2-oxopropyl phosphate. 1-deoxy-D-xylulose 5-phosphate is bound at residue 8-9; that stretch reads DH. A 3-amino-2-oxopropyl phosphate-binding site is contributed by arginine 17. Residue histidine 42 is the Proton acceptor of the active site. Arginine 44 and histidine 49 together coordinate 1-deoxy-D-xylulose 5-phosphate. The active-site Proton acceptor is glutamate 69. Threonine 99 lines the 1-deoxy-D-xylulose 5-phosphate pocket. Residue histidine 190 is the Proton donor of the active site. 3-amino-2-oxopropyl phosphate-binding positions include glycine 191 and 212-213; that span reads GH.

Belongs to the PNP synthase family. Homooctamer; tetramer of dimers.

It is found in the cytoplasm. The enzyme catalyses 3-amino-2-oxopropyl phosphate + 1-deoxy-D-xylulose 5-phosphate = pyridoxine 5'-phosphate + phosphate + 2 H2O + H(+). The protein operates within cofactor biosynthesis; pyridoxine 5'-phosphate biosynthesis; pyridoxine 5'-phosphate from D-erythrose 4-phosphate: step 5/5. Functionally, catalyzes the complicated ring closure reaction between the two acyclic compounds 1-deoxy-D-xylulose-5-phosphate (DXP) and 3-amino-2-oxopropyl phosphate (1-amino-acetone-3-phosphate or AAP) to form pyridoxine 5'-phosphate (PNP) and inorganic phosphate. This is Pyridoxine 5'-phosphate synthase from Neisseria meningitidis serogroup C.